The chain runs to 350 residues: GTPase Obg (350 aa).

An Obg domain is found at 1-159; it reads MKFLDQAKIY…RWIWLRLKLI (159 aa). The OBG-type G domain maps to 160–328; that stretch reads ADVGLVGLPN…VLRLLQDRVT (169 aa). Residues 166-173, 191-195, 213-216, 280-283, and 309-311 contribute to the GTP site; these read GLPNAGKS, FTTLH, DIPG, NKID, and SGV. Mg(2+) is bound by residues Ser-173 and Thr-193. The disordered stretch occupies residues 331–350; that stretch reads REAARDAAPPQAAAGREETA.

Belongs to the TRAFAC class OBG-HflX-like GTPase superfamily. OBG GTPase family. As to quaternary structure, monomer. Mg(2+) is required as a cofactor.

Its subcellular location is the cytoplasm. An essential GTPase which binds GTP, GDP and possibly (p)ppGpp with moderate affinity, with high nucleotide exchange rates and a fairly low GTP hydrolysis rate. Plays a role in control of the cell cycle, stress response, ribosome biogenesis and in those bacteria that undergo differentiation, in morphogenesis control. This chain is GTPase Obg, found in Gluconacetobacter diazotrophicus (strain ATCC 49037 / DSM 5601 / CCUG 37298 / CIP 103539 / LMG 7603 / PAl5).